A 240-amino-acid chain; its full sequence is Homeobox protein goosecoid (240 aa).

Residues 146 to 205 constitute a DNA-binding region (homeobox); that stretch reads KRRHRTIFTDEQLEALENLFQETKYPDVGTREQLARKVHLREEKVEVWFKNRRAKWRRQK. The segment at 199 to 240 is disordered; that stretch reads AKWRRQKRSSSEESENSQKWNKSTKTTSEKIEEGKSDVDSDS. The span at 225–240 shows a compositional bias: basic and acidic residues; that stretch reads TSEKIEEGKSDVDSDS.

Belongs to the paired homeobox family. Bicoid subfamily.

It localises to the nucleus. The polypeptide is Homeobox protein goosecoid (gsc) (Danio rerio (Zebrafish)).